The sequence spans 395 residues: GTPase Obg (395 aa).

The Obg domain maps to 1-159 (MQFVDEASII…RNLRFEMKVM (159 aa)). Residues 128-147 (IHFKSSTNRAPRKTTPGTEG) are disordered. The region spanning 160-333 (ADVGLLGVPN…LVQAAHRWLT (174 aa)) is the OBG-type G domain. GTP-binding positions include 166–173 (GVPNAGKS), 191–195 (FTTLV), 213–216 (DVPG), 283–286 (NKLD), and 314–316 (SAI). Mg(2+) contacts are provided by S173 and T193. Residues 340–368 (AEDETAFEHEREMRRRMEDEAVARAEARM) are compositionally biased toward basic and acidic residues. Residues 340–395 (AEDETAFEHEREMRRRMEDEAVARAEARMSRKRKPAEDDDDDFDEDDYDVEVEYAP) form a disordered region. Residues 376 to 395 (EDDDDDFDEDDYDVEVEYAP) are compositionally biased toward acidic residues.

The protein belongs to the TRAFAC class OBG-HflX-like GTPase superfamily. OBG GTPase family. In terms of assembly, monomer. Requires Mg(2+) as cofactor.

It localises to the cytoplasm. Its function is as follows. An essential GTPase which binds GTP, GDP and possibly (p)ppGpp with moderate affinity, with high nucleotide exchange rates and a fairly low GTP hydrolysis rate. Plays a role in control of the cell cycle, stress response, ribosome biogenesis and in those bacteria that undergo differentiation, in morphogenesis control. The chain is GTPase Obg from Chromohalobacter salexigens (strain ATCC BAA-138 / DSM 3043 / CIP 106854 / NCIMB 13768 / 1H11).